The chain runs to 194 residues: dTTP/UTP pyrophosphatase (194 aa).

Asp-76 acts as the Proton acceptor in catalysis.

The protein belongs to the Maf family. YhdE subfamily. It depends on a divalent metal cation as a cofactor.

The protein resides in the cytoplasm. The enzyme catalyses dTTP + H2O = dTMP + diphosphate + H(+). The catalysed reaction is UTP + H2O = UMP + diphosphate + H(+). Its function is as follows. Nucleoside triphosphate pyrophosphatase that hydrolyzes dTTP and UTP. May have a dual role in cell division arrest and in preventing the incorporation of modified nucleotides into cellular nucleic acids. The sequence is that of dTTP/UTP pyrophosphatase from Shewanella sp. (strain MR-7).